Here is a 323-residue protein sequence, read N- to C-terminus: Prostaglandin F synthase 1 (323 aa).

NADP(+)-binding positions include 20 to 24 (GFGTY) and aspartate 50. Tyrosine 55 functions as the Proton donor in the catalytic mechanism. Histidine 117 serves as a coordination point for substrate. NADP(+) is bound by residues 166–167 (SN), glutamine 190, 216–221 (YAALGA), and 270–280 (KSFNKKRIKEN).

This sequence belongs to the aldo/keto reductase family. As to quaternary structure, monomer. The N-terminus is blocked.

Its subcellular location is the cytoplasm. The catalysed reaction is prostaglandin F2alpha + NADP(+) = prostaglandin D2 + NADPH + H(+). The protein operates within lipid metabolism; prostaglandin biosynthesis. Functionally, catalyzes the reduction of PGD(2) and PGH(2) to PGF(2 alpha) and a stereoisomer, respectively. It has a broad substrate specificity and also reduces other carbonyl compounds. This is Prostaglandin F synthase 1 from Bos taurus (Bovine).